The following is a 1943-amino-acid chain: Trichohyalin (1943 aa).

The interval 1 to 91 is S-100-like; it reads MSPLLRSICD…AQACYYALGQ (91 aa). 2 consecutive EF-hand domains span residues 23–48 and 49–84; these read CDGA…LRRP and HDPK…VAQA. Ca(2+) contacts are provided by D32, D62, D64, N66, R68, and E73. 3 disordered regions span residues 110 to 164, 186 to 209, and 222 to 274; these read LQDR…LEQR, RRAE…DEEQ, and GREE…LQEE. Residues 197-209 show a composition bias toward basic and acidic residues; that stretch reads KGHETEEFPDEEQ. The 1-1; approximate repeat unit spans residues 314 to 326; that stretch reads RREQQEERREQQE. The tract at residues 314–377 is 5 X 13 AA tandem repeats of R-R-E-Q-E-E-E-R-R-E-Q-Q-L; that stretch reads RREQQEERRE…QEEERREQQL (64 aa). The 1-2; approximate repeat unit spans residues 327-339; it reads RREQQEERREQQL. A 1-3; approximate repeat occupies 340–351; the sequence is RREQEERREQQL. Tandem repeats lie at residues 352-364, 365-377, 378-383, 384-389, 390-395, 396-401, 402-407, 408-413, 414-419, and 420-425. Residues 378–425 form an 8 X 6 AA tandem repeats of R-R-E-Q-Q-L region; that stretch reads RREQQLRREQQLRREQQLRREQQLRREQQLRREQQLRREQQLRREQQL. Residues 425–683 are 9 X 28 AA approximate tandem repeats; that stretch reads LRREQEEERH…REHEEERREQ (259 aa). Disordered regions lie at residues 426 to 485, 509 to 546, 608 to 819, and 837 to 872; these read RREQ…EERR, REQE…EERR, ERLE…EKEQ, and EEQL…RRDQ. Composition is skewed to basic and acidic residues over residues 608–684, 724–781, 789–812, and 859–872; these read ERLE…REQE, RKQE…ERGR, PLRE…RFLP, and DQER…RRDQ. Repeat copies occupy residues 906–935, 936–965, 966–995, 996–1025, 1026–1055, 1056–1085, 1086–1115, 1116–1145, 1146–1175, and 1176–1204. The interval 906 to 1204 is 10 X 30 AA tandem repeats; that stretch reads LQEEEEELQR…RERQYREEEE (299 aa). The span at 950–992 shows a compositional bias: basic and acidic residues; the sequence is KRRRQERERQYRKDKKLQQKEEQLLGEEPEKRRRQEREKKYRE. Disordered stretches follow at residues 950–1000, 1046–1120, 1137–1162, 1193–1371, 1404–1435, 1492–1691, 1757–1820, 1834–1864, and 1876–1928; these read KRRR…QQEE, RERQ…QQEE, ERQY…EKRR, QERE…RHQE, REQQ…FREE, QQLR…ERDR, PERE…RDGK, EQRL…EQEL, and RERK…VRSS. Positions 1052-1064 are enriched in acidic residues; that stretch reads EEEELQQEEEQLL. Composition is skewed to basic and acidic residues over residues 1065–1085 and 1092–1111; these read GEER…KEEE and QLLR…RQCR. Over residues 1142 to 1151 the composition is skewed to acidic residues; that stretch reads EEEEVQQEEE. Residues 1152-1162 show a composition bias toward basic and acidic residues; sequence QLLREEPEKRR. 2 stretches are compositionally biased toward basic and acidic residues: residues 1214 to 1263 and 1274 to 1371; these read YRDE…DRQS and QQER…RHQE. The 23 X 26 AA approximate tandem repeats stretch occupies residues 1292–1894; the sequence is HFPEEEQLER…IRRQQKEEQR (603 aa). 3 stretches are compositionally biased toward basic and acidic residues: residues 1492–1524, 1533–1673, and 1682–1691; these read QQLR…EQQL, FLQE…REEE, and QQLRRQERDR. The segment covering 1876–1912 has biased composition (basic and acidic residues); sequence RERKLREEHIRRQQKEEQRHRQVGEIKSQEGKGHGRL.

The protein belongs to the S100-fused protein family. Monomer. Post-translationally, substrate of transglutaminase. Some 200 arginines are probably converted to citrullines by peptidylarginine deimidase. Found in the hard keratinizing tissues such as the inner root sheath (IRS) of hair follicles and medulla, and in the filiform papillae of dorsal tongue epithelium.

In terms of biological role, intermediate filament-associated protein that associates in regular arrays with keratin intermediate filaments (KIF) of the inner root sheath cells of the hair follicle and the granular layer of the epidermis. It later becomes cross-linked to KIF by isodipeptide bonds. It may serve as scaffold protein, together with involucrin, in the organization of the cell envelope or even anchor the cell envelope to the KIF network. It may be involved in its own calcium-dependent postsynthetic processing during terminal differentiation. In Homo sapiens (Human), this protein is Trichohyalin (TCHH).